Here is a 276-residue protein sequence, read N- to C-terminus: Elongation factor Ts (276 aa).

The segment at 80–83 (TDFV) is involved in Mg(2+) ion dislocation from EF-Tu.

This sequence belongs to the EF-Ts family.

It localises to the cytoplasm. In terms of biological role, associates with the EF-Tu.GDP complex and induces the exchange of GDP to GTP. It remains bound to the aminoacyl-tRNA.EF-Tu.GTP complex up to the GTP hydrolysis stage on the ribosome. The chain is Elongation factor Ts from Kocuria rhizophila (strain ATCC 9341 / DSM 348 / NBRC 103217 / DC2201).